A 300-amino-acid polypeptide reads, in one-letter code: ATP-dependent (S)-NAD(P)H-hydrate dehydratase (300 aa).

The region spanning 6-297 is the YjeF C-terminal domain; that stretch reads YAGKIKEFIP…GCIHQSFTSL (292 aa). (6S)-NADPHX contacts are provided by residues Gly-106 and 158–164; that span reads NEVEFKR. Residues 188 to 192 and 218 to 227 contribute to the ATP site; these read KGSTD and GSNRRCGGQG. (6S)-NADPHX is bound at residue Asp-228.

Belongs to the NnrD/CARKD family. Mg(2+) is required as a cofactor.

It catalyses the reaction (6S)-NADHX + ATP = ADP + phosphate + NADH + H(+). The enzyme catalyses (6S)-NADPHX + ATP = ADP + phosphate + NADPH + H(+). Its function is as follows. Catalyzes the dehydration of the S-form of NAD(P)HX at the expense of ATP, which is converted to ADP. Together with NAD(P)HX epimerase, which catalyzes the epimerization of the S- and R-forms, the enzyme allows the repair of both epimers of NAD(P)HX, a damaged form of NAD(P)H that is a result of enzymatic or heat-dependent hydration. This Pediculus humanus subsp. corporis (Body louse) protein is ATP-dependent (S)-NAD(P)H-hydrate dehydratase.